The primary structure comprises 339 residues: Dihydroorotate dehydrogenase (quinone) (339 aa).

FMN is bound by residues 62-66 (AGMDK) and T86. K66 contributes to the substrate binding site. 111-115 (NRMGF) contributes to the substrate binding site. FMN contacts are provided by N139 and N172. N172 contacts substrate. Residue S175 is the Nucleophile of the active site. Residue N177 participates in substrate binding. FMN-binding residues include K217 and T245. 246 to 247 (NT) contacts substrate. FMN is bound by residues G268, G297, and 318 to 319 (YS).

It belongs to the dihydroorotate dehydrogenase family. Type 2 subfamily. In terms of assembly, monomer. The cofactor is FMN.

It localises to the cell membrane. It catalyses the reaction (S)-dihydroorotate + a quinone = orotate + a quinol. It participates in pyrimidine metabolism; UMP biosynthesis via de novo pathway; orotate from (S)-dihydroorotate (quinone route): step 1/1. Functionally, catalyzes the conversion of dihydroorotate to orotate with quinone as electron acceptor. The sequence is that of Dihydroorotate dehydrogenase (quinone) from Shewanella piezotolerans (strain WP3 / JCM 13877).